The chain runs to 328 residues: Leucine carboxyl methyltransferase 1 (328 aa).

Residues Arg81, Gly105, Asp128, 175 to 177, and Glu201 contribute to the S-adenosyl-L-methionine site; that span reads DLN.

Belongs to the methyltransferase superfamily. LCMT family.

The catalysed reaction is [phosphatase 2A protein]-C-terminal L-leucine + S-adenosyl-L-methionine = [phosphatase 2A protein]-C-terminal L-leucine methyl ester + S-adenosyl-L-homocysteine. Its activity is regulated as follows. Inhibited by S-adenosyl-L-homocysteine. Its function is as follows. Methylates the carboxyl group of the C-terminal leucine residue of protein phosphatase 2A catalytic subunits to form alpha-leucine ester residues. Acts on the two major protein phosphatase 2A catalytic subunits, PPH21 and PPH22. This chain is Leucine carboxyl methyltransferase 1 (PPM1), found in Saccharomyces cerevisiae (strain ATCC 204508 / S288c) (Baker's yeast).